The primary structure comprises 268 residues: Holocytochrome c-type synthase (268 aa).

Low complexity predominate over residues 1–22; the sequence is MGLSPSAPAVAVQASNASASPP. A disordered region spans residues 1-25; sequence MGLSPSAPAVAVQASNASASPPSGC. Gly-2 carries N-myristoyl glycine lipidation. 2 HRM repeats span residues 24–29 and 34–39; these read GCPMHE and GCPVNT.

It belongs to the cytochrome c-type heme lyase family.

The protein resides in the mitochondrion inner membrane. Its subcellular location is the membrane. The catalysed reaction is holo-[cytochrome c] = apo-[cytochrome c] + heme b. Its function is as follows. Lyase that catalyzes the covalent linking of the heme group to the cytochrome C apoprotein to produce the mature functional cytochrome. The protein is Holocytochrome c-type synthase of Homo sapiens (Human).